Reading from the N-terminus, the 620-residue chain is Notoamide biosynthesis transcriptional activator notL' (620 aa).

The tract at residues 1 to 26 (MPPSSKSRRLPPAASDSAASDAQKRR) is disordered. The segment at residues 33–59 (CSACKARKLKCTGAPPCANCVKSRIEC) is a DNA-binding region (zn(2)-C6 fungal-type). The interval 591-620 (ETGAFFLDPDQPSGNSTPIKSETPEGTAIS) is disordered.

It is found in the nucleus. Its function is as follows. Transcription factor that probably regulates the expression of the gene cluster that mediates the biosynthesis of notoamide, a fungal indole alkaloid that belongs to a family of natural products containing a characteristic bicyclo[2.2.2]diazaoctane core. The protein is Notoamide biosynthesis transcriptional activator notL' of Aspergillus versicolor.